The following is a 65-amino-acid chain: Small, acid-soluble spore protein Tlp (65 aa).

It belongs to the Tlp family.

Its subcellular location is the spore core. This chain is Small, acid-soluble spore protein Tlp, found in Bacillus anthracis (strain A0248).